We begin with the raw amino-acid sequence, 474 residues long: MSTIMVDTNSELCILTPLDEDDLESPLSGEFLQDIVDIQDITQTIGDDGSTPFGASEHQFFGNSPGSIGSVSTDLTDTLSPASSPASITFPAASGSAEDAACKSLNLECRVCSDKASGFHYGVHACEGCKGFFRRTIRLKLVYDRCERMCKIQKKNRNKCQYCRFEKCLNVGMSHNAIRFGRMPRSEKAKLKAEVLMCDQDVKDSQMADLLSLARLIYDAYLKNFNMNKVKARAILTGKASNPPFVIHDMETLCMAEKTLVAKLVANGIQNKEAEVRIFHCCQCTSVETVTELTEFAKSIPGFTELDLNDQVTLLKYGVYEAMFAMLASVMNKDGMLVAYGNGFITREFLKSLRKPIGDMMEPKFEFAMKFNALELDDSDLSLFVAALICCGDRPGLVNIPSIEKMQESIVHVLKLHLQSNHPDDSFLFPKLLQKMADLRQLVTEHAQLVQTIKKTETDAALHPLLQEIYRDMY.

Residues 106-180 (NLECRVCSDK…VGMSHNAIRF (75 aa)) constitute a DNA-binding region (nuclear receptor). 2 NR C4-type zinc fingers span residues 109 to 129 (CRVC…CEGC) and 146 to 168 (CERM…FEKC). The NR LBD domain occupies 245 to 472 (FVIHDMETLC…HPLLQEIYRD (228 aa)).

Belongs to the nuclear hormone receptor family. NR1 subfamily. As to quaternary structure, heterodimer with the retinoid X receptor. In terms of tissue distribution, ubiquitous.

It is found in the nucleus. Ligand-activated transcription factor. Key regulator of lipid metabolism. Activated by lipids. Receptor for peroxisome proliferators such as hypolipidemic drugs and fatty acids. Once activated by a ligand, the receptor binds to promoter elements of target genes. Regulates the peroxisomal beta-oxidation pathway of fatty acids. This is Peroxisome proliferator-activated receptor alpha (ppara) from Xenopus laevis (African clawed frog).